The sequence spans 760 residues: ATP-dependent zinc metalloprotease FtsH (760 aa).

Topologically, residues 1–5 are cytoplasmic; it reads MNRKN. Residues 6–26 traverse the membrane as a helical segment; that stretch reads VTRTITAIAVVVLLGWSFFYF. Topologically, residues 27–110 are extracellular; that stretch reads SDDTRGYKPV…KVSTVVNQGS (84 aa). A helical membrane pass occupies residues 111–131; it reads ILGELLVYVLPLLLLVGLFVM. Residues 132–760 are Cytoplasmic-facing; sequence FSRMQGGARM…EVSRTKPAHG (629 aa). 203-210 serves as a coordination point for ATP; that stretch reads GPPGTGKT. Zn(2+) is bound at residue histidine 425. The active site involves glutamate 426. Residues histidine 429 and aspartate 501 each contribute to the Zn(2+) site. A disordered region spans residues 616 to 760; it reads DFGGRIPSDK…EVSRTKPAHG (145 aa). Residues 650–669 are compositionally biased toward low complexity; sequence AFKAAIAQATQAAEAARSDA. Residues 740–750 are compositionally biased toward acidic residues; that stretch reads GSDESSAEQDD.

In the central section; belongs to the AAA ATPase family. The protein in the C-terminal section; belongs to the peptidase M41 family. Homohexamer. It depends on Zn(2+) as a cofactor.

It localises to the cell membrane. In terms of biological role, acts as a processive, ATP-dependent zinc metallopeptidase for both cytoplasmic and membrane proteins. Plays a role in the quality control of integral membrane proteins. This is ATP-dependent zinc metalloprotease FtsH from Mycobacterium bovis (strain ATCC BAA-935 / AF2122/97).